Here is a 160-residue protein sequence, read N- to C-terminus: 3-dehydroquinate dehydratase (160 aa).

The active-site Proton acceptor is the Y22. Substrate-binding residues include N73, H79, and D86. The Proton donor role is filled by H99. Substrate-binding positions include 100–101 (IS) and R110.

It belongs to the type-II 3-dehydroquinase family. Homododecamer.

The catalysed reaction is 3-dehydroquinate = 3-dehydroshikimate + H2O. It functions in the pathway metabolic intermediate biosynthesis; chorismate biosynthesis; chorismate from D-erythrose 4-phosphate and phosphoenolpyruvate: step 3/7. Functionally, catalyzes a trans-dehydration via an enolate intermediate. In Campylobacter lari (strain RM2100 / D67 / ATCC BAA-1060), this protein is 3-dehydroquinate dehydratase.